A 58-amino-acid chain; its full sequence is Photosystem II reaction center protein K (58 aa).

A propeptide spanning residues 1–21 (MLAIFNIYLDNAFHLNGIILA) is cleaved from the precursor. The helical transmembrane segment at 29–49 (IFDPIVDVMPIIPVFFFLLAF) threads the bilayer.

This sequence belongs to the PsbK family. In terms of assembly, PSII is composed of 1 copy each of membrane proteins PsbA, PsbB, PsbC, PsbD, PsbE, PsbF, PsbH, PsbI, PsbJ, PsbK, PsbL, PsbM, PsbT, PsbX, PsbY, PsbZ, Psb30/Ycf12, at least 3 peripheral proteins of the oxygen-evolving complex and a large number of cofactors. It forms dimeric complexes.

It localises to the plastid. It is found in the chloroplast thylakoid membrane. One of the components of the core complex of photosystem II (PSII). PSII is a light-driven water:plastoquinone oxidoreductase that uses light energy to abstract electrons from H(2)O, generating O(2) and a proton gradient subsequently used for ATP formation. It consists of a core antenna complex that captures photons, and an electron transfer chain that converts photonic excitation into a charge separation. The sequence is that of Photosystem II reaction center protein K from Physcomitrium patens (Spreading-leaved earth moss).